A 901-amino-acid chain; its full sequence is MLIPSKLSRPVRLEHTVVRERLLAKLSGASNYRLALITSPAGYGKTTLISQWAAGKTELGWYSLDEGDNQPERFASYLIAAIQQATGGHCASSEVMAQKRQYASLSSLFAQLFIELAAWPRPLFLVIDDYHLITNPVIHEAMRFFLRHQPDHLTLVVLSRNLPQLGIANLRVREQLLEIGSQQLAFTHQEARQFFDCRLSQPIEPAQSNRLCDDVAGWATALQLIALSARQNTGAVHQSARRLAGINASHLSDYLVDEVLNNVDNDTRQFLLKSALLRSMNDALIARVTGEENGQMRLEEIERQGLFLQRMDDSGEWFSYHPLFGSFLRQRCQWELSTELPDIHRAAAESWMAQGFPSEAIHHALAAGDASMLRDILLNHAWGLFNHSELTLLEQSLKALPWESLLANPRLVLLQAWLMQSQHRYSEVNTLLARAEQEMKGEMDDTLHGEFNALRAQVAINDGDPDEAERLAMVALETLPLANFYSRIVATSVHGEVLHCKGDLTKSLSVMQQTELMARRHDVWHYALWSLIQQSEILFAQGFLQAAWETQEKAFTLIQEQHLEQLPLHEFLLRIRAQLLWAWARLDEAEACARTGMTVLANYQPQQQLQCLALLVQCSLARGDLDNARSHLNRLENLLGNGHYHSDWVSNADKVRVIYWQMTGDKAAAAAWLRQTPKPAFANNHFLQSQWRNIARVQILLGDYEPAEMVLEELNENARSLRLMSDINRNLLLLNQLYWNAGRKSDAQRVLMEALTLANRTGFISHFVIEGEAMAQQLRQLLQLNTLPEIEQHRAQRILRDINQHHRHKFAHFDENFVNKLLNHPEVPELIRTSPLTQREWQVLGLIYSGYSNDQIAGELDVAATTIKTHIRNLYQKLGVAHRQDAVQHAQQLLKMMGYGV.

39–46 (SPAGYGKT) contacts ATP. An HTH luxR-type domain is found at 829–894 (ELIRTSPLTQ…DAVQHAQQLL (66 aa)). A DNA-binding region (H-T-H motif) is located at residues 853 to 872 (NDQIAGELDVAATTIKTHIR).

Belongs to the MalT family. Monomer in solution. Oligomerizes to an active state in the presence of the positive effectors ATP and maltotriose.

Activated by ATP and maltotriose, which are both required for DNA binding. In terms of biological role, positively regulates the transcription of the maltose regulon whose gene products are responsible for uptake and catabolism of malto-oligosaccharides. Specifically binds to the promoter region of its target genes, recognizing a short DNA motif called the MalT box. This Cronobacter sakazakii (strain ATCC BAA-894) (Enterobacter sakazakii) protein is HTH-type transcriptional regulator MalT.